Here is a 220-residue protein sequence, read N- to C-terminus: Cytidylate kinase (220 aa).

Residue 10–18 coordinates ATP; the sequence is GPASSGKST.

It belongs to the cytidylate kinase family. Type 1 subfamily.

It is found in the cytoplasm. It carries out the reaction CMP + ATP = CDP + ADP. The enzyme catalyses dCMP + ATP = dCDP + ADP. The protein is Cytidylate kinase of Lactococcus lactis subsp. lactis (strain IL1403) (Streptococcus lactis).